A 1533-amino-acid polypeptide reads, in one-letter code: MKFLGGNDDRNGRGGVGVGTDAIVGSRGGVSQDAADAAGAAAAAAVGYVFQQRPSPGGVGVGVGGVGGGVPGVGAVGSTLHEAAAAEYAAHFAQKQQQTRWACGDDGHGIDNPDKWKYNPPMNPANAAPGGPPGNGSNGGPGAIGTIGMGSGLGGGGGGGAGGGNNGGSGTNGGLHHQSMAAAAANMAAMQQAAALAKHNHMISQAAAAVAAQQQHQHPHQQHPQQQQQQQQAQNQGHPHHLMGGGNGLGNGNGLGIQHPGQQQQQQQQQQQQQHPGQYNANLLNHAAALGHMSSYAQSGGSMYDHHGGAMHPGMNGGMPKQQPLGPPGAGGPQDYVYMGGQTTVPMGAAMMPPQNQYMNSSAVAAANRNAAITTSTAKKLWEKSDGKGVSSSTPGGPLHPLQIPGIGDPSSVWKDHTWSTQGENILVPPPSRAYAHGGASDTSNSGNAGILSPRDSTCAKVVEYVFSGSPTNKDSSLSGLEPHLRNLKFDDNDKSRDDKEKANSPFDTNGLKKDDQVTNSNGVVNGIDDDKGFNRTPGSRQPSPAEESQPRPPNLLFPPLPFNHMLMDHGQGMGGGLGGVVGSGNGVGGGSGGGGAGGAYAAHQQMAAQMSQLQPPMMNGVGGGMPMAAQSPMLNHQAAGPNHMESPGNLLQQQNFDVQQLFRSQNPGLAAVATNAAAAAAAAAAATSAASAAAAVGAPPVPNGSLQQSQQQQQQQQQQQQQQQMHMAAASQQFLAAQQQAQNAAYAAQQATSYVINPGQEAAPYMGMIAAAQMPYYGVAPWGMYPGNLIPQQGTQPRRPLTPSQQGAENQPYQVIPAFLDHTGSLLMGGPRTGTPMRLVSPAPVLVPPGATRAGPPPPQGPQLYQPQPQTAQQNLYSQQNGSSVGGLALNTSSLTGRRDSFDRSTSAFSPSTMDYTSSGVAAAANAVNSTVAQAAAAAAAAAAARGKWPGAMSGAASGAYGALGAGNASASPLGAPITPPPSAQSCLLGSRAPGAESRQRQQQQQQLAAVGLPATAAAAQAAVAAAANNMFGSNSSIFSNPLAIPGTAAVAAAAAAAAAANSRQVAATAAAAAAVAAAAGGVGGAPQPGRSRLLEDFRNQRYPNLQLRDLANHIVEFSQDQHGSRFIQQKLERATAAEKQMVFSEILAAAYSLMTDVFGNYVIQKFFEFGTPEQKNTLGMQVKGHVLQLALQMYGCRVIQKALESISPEQQQEIVHELDGHVLKCVKDQNGNHVVQKCIECVDPVALQFIINAFKGQVYSLSTHPYGCRVIQRILEHCTAEQTTPILDELHEHTEQLIQDQYGNYVIQHVLEHGKQEDKSILINSVRGKVLVLSQHKFASNVVEKCVTHATRGERTGLIDEVCTFNDNALHVMMKDQYANYVVQKMIDVSEPTQLKKLMTKIRPHMAALRKYTYGKHINAKLEKYYMKITNPITVGTGAGGVPAASSAAAVSSGATSASVTACTSGSSTTTTSTTNSLASPTICSVQENGSAMVVEPSSPDASESSSSVVSGAVNSSLGPIGPPTNGNVVL.

Disordered regions lie at residues 102–149 (ACGD…TIGM), 207–276 (AAAV…QQHP), 304–331 (YDHH…PGAG), and 382–452 (WEKS…AGIL). Positions 103–117 (CGDDGHGIDNPDKWK) are enriched in basic and acidic residues. The segment covering 133 to 149 (PGNGSNGGPGAIGTIGM) has biased composition (gly residues). Residues 207 to 237 (AAAVAAQQQHQHPHQQHPQQQQQQQQAQNQG) show a composition bias toward low complexity. Gly residues predominate over residues 243–255 (MGGGNGLGNGNGL). Residues 256–276 (GIQHPGQQQQQQQQQQQQQHP) show a composition bias toward low complexity. Serine 453, serine 468, serine 470, and serine 477 each carry phosphoserine. The segment covering 470–479 (SPTNKDSSLS) has biased composition (polar residues). 4 disordered regions span residues 470–558 (SPTN…NLLF), 697–725 (VGAP…QQQQ), 846–912 (VLVP…AFSP), and 975–1008 (LGAP…QQQQ). Positions 483 to 503 (PHLRNLKFDDNDKSRDDKEKA) are enriched in basic and acidic residues. The residue at position 505 (serine 505) is a Phosphoserine. Positions 863–875 (PQLYQPQPQTAQQ) are enriched in low complexity. One can recognise a PUM-HD domain in the interval 1091-1428 (GRSRLLEDFR…HINAKLEKYY (338 aa)). 8 Pumilio repeats span residues 1111–1146 (DLAN…MVFS), 1147–1182 (EILA…TLGM), 1183–1218 (QVKG…EIVH), 1219–1254 (ELDG…FIIN), 1255–1290 (AFKG…PILD), 1291–1326 (ELHE…ILIN), 1327–1362 (SVRG…GLID), and 1366–1402 (TFND…KLMT). The segment at 1126-1130 (SRFIQ) is adenine-nucleotide binding in RNA target. A uracil-nucleotide binding in RNA target region spans residues 1162–1166 (NYVIQ). The tract at residues 1198–1202 (CRVIQ) is adenine-nucleotide binding in RNA target. The tract at residues 1234–1238 (NHVVQ) is non-specific-nucleotide binding in RNA target. The interval 1270 to 1274 (CRVIQ) is adenine-nucleotide binding in RNA target. Residues 1306-1310 (NYVIQ) form a uracil-nucleotide binding in RNA target region. The guanine-nucleotide binding in RNA target stretch occupies residues 1342–1346 (SNVVE). Residues 1382–1386 (NYVVQ) are uracil-nucleotide binding in RNA target. The segment at 1494 to 1533 (AMVVEPSSPDASESSSSVVSGAVNSSLGPIGPPTNGNVVL) is disordered. The span at 1496-1519 (VVEPSSPDASESSSSVVSGAVNSS) shows a compositional bias: low complexity.

As to quaternary structure, interacts with nanos (nos) and brat. Acts via the formation of a quaternary complex composed of pum, nanos, brat and the 3'-UTR mRNA of hb.

It localises to the cytoplasm. The protein localises to the cytoplasmic ribonucleoprotein granule. Functionally, sequence-specific RNA-binding protein that acts as a post-transcriptional repressor by binding the 3'-UTR of mRNA targets. Binds to an RNA consensus sequence, the Pumilio Response Element (PRE), 5'-UGUANAUA-3', that is related to the Nanos Response Element (NRE). Mediates post-transcriptional repression of transcripts via different mechanisms: acts via direct recruitment of deadenylase complexes leading to translational inhibition and mRNA degradation. Also mediates deadenylation-independent repression by promoting accessibility of miRNAs. Mediates post-transcriptional silencing of E2f mRNA by binding to its 3'-UTR and promoting miRNA regulation. Required for abdominal development and to support proliferation and self-renewal of germ cells. Pum is the only gene required for nanos (nos) activity that is not also required for posterior localization of germline determinants. Pum is required during embryogenesis when nanos activity apparently moves anteriorly from the posterior pole. This chain is Maternal protein pumilio (pum), found in Drosophila melanogaster (Fruit fly).